The following is a 265-amino-acid chain: Ribosomal RNA small subunit methyltransferase A (265 aa).

S-adenosyl-L-methionine contacts are provided by His-17, Leu-19, Gly-44, Glu-65, Asp-90, and Asn-112.

Belongs to the class I-like SAM-binding methyltransferase superfamily. rRNA adenine N(6)-methyltransferase family. RsmA subfamily.

The protein localises to the cytoplasm. It carries out the reaction adenosine(1518)/adenosine(1519) in 16S rRNA + 4 S-adenosyl-L-methionine = N(6)-dimethyladenosine(1518)/N(6)-dimethyladenosine(1519) in 16S rRNA + 4 S-adenosyl-L-homocysteine + 4 H(+). In terms of biological role, specifically dimethylates two adjacent adenosines (A1518 and A1519) in the loop of a conserved hairpin near the 3'-end of 16S rRNA in the 30S particle. May play a critical role in biogenesis of 30S subunits. The polypeptide is Ribosomal RNA small subunit methyltransferase A (Xylella fastidiosa (strain 9a5c)).